Consider the following 236-residue polypeptide: Small ribosomal subunit protein uS2c (236 aa).

This sequence belongs to the universal ribosomal protein uS2 family.

It localises to the plastid. Its subcellular location is the chloroplast. This Morus indica (Mulberry) protein is Small ribosomal subunit protein uS2c (rps2).